A 547-amino-acid chain; its full sequence is Probable acetolactate synthase (547 aa).

E57 serves as a coordination point for thiamine diphosphate. FAD is bound by residues P159 and 299-318; that span reads DRVE…LYGD. Residues 388–468 form a thiamine pyrophosphate binding region; sequence DFGSYAGRMI…VVSVIGNNGI (81 aa). Mg(2+) contacts are provided by D439 and N466.

The protein belongs to the TPP enzyme family. Mg(2+) serves as cofactor. Thiamine diphosphate is required as a cofactor.

It catalyses the reaction 2 pyruvate + H(+) = (2S)-2-acetolactate + CO2. Its pathway is amino-acid biosynthesis; L-isoleucine biosynthesis; L-isoleucine from 2-oxobutanoate: step 1/4. It functions in the pathway amino-acid biosynthesis; L-valine biosynthesis; L-valine from pyruvate: step 1/4. The chain is Probable acetolactate synthase (ilvG) from Mycobacterium bovis (strain ATCC BAA-935 / AF2122/97).